Here is a 547-residue protein sequence, read N- to C-terminus: Glucose-6-phosphate isomerase (547 aa).

The Proton donor role is filled by Glu-352. Catalysis depends on residues His-383 and Lys-511.

The protein belongs to the GPI family.

The protein resides in the cytoplasm. The catalysed reaction is alpha-D-glucose 6-phosphate = beta-D-fructose 6-phosphate. Its pathway is carbohydrate biosynthesis; gluconeogenesis. The protein operates within carbohydrate degradation; glycolysis; D-glyceraldehyde 3-phosphate and glycerone phosphate from D-glucose: step 2/4. Catalyzes the reversible isomerization of glucose-6-phosphate to fructose-6-phosphate. This is Glucose-6-phosphate isomerase from Rhodospirillum rubrum (strain ATCC 11170 / ATH 1.1.1 / DSM 467 / LMG 4362 / NCIMB 8255 / S1).